Here is a 469-residue protein sequence, read N- to C-terminus: UDP-glycosyltransferase 75B1 (469 aa).

His-16 functions as the Proton acceptor in the catalytic mechanism. His-16 contacts an anthocyanidin. UDP-alpha-D-glucose contacts are provided by Gln-334, His-349, Trp-352, Ser-354, Glu-357, Asp-373, and Gln-374.

This sequence belongs to the UDP-glycosyltransferase family. Interacts with CALS1, ROP1 and phragmoplastin.

It is found in the cytoplasm. The protein localises to the perinuclear region. It localises to the cytoskeleton. Its subcellular location is the phragmoplast. The catalysed reaction is (indol-3-yl)acetate + UDP-alpha-D-glucose = 1-O-(indol-3-ylacetyl)-beta-D-glucose + UDP. It participates in plant hormone metabolism; auxin conjugation. Its function is as follows. Possesses low catalytic activity on indole-3-acetic acid (IAA) in vitro. May transfer UDP-glucose from sucrose synthase to callose synthase for the synthesis of callose at the forming cell plate during cytokinesis. Has high affinity for 4-aminobenzoate. Catalyzes the formation of 4-aminobenzoate glucose ester which represents a storage form of 4-aminobenzoate in the vacuole. Is the major source of this activity in the plant. Also active in vitro on benzoates and benzoate derivatives. In Arabidopsis thaliana (Mouse-ear cress), this protein is UDP-glycosyltransferase 75B1 (UGT75B1).